Reading from the N-terminus, the 899-residue chain is Lipoxygenase 2, chloroplastic (899 aa).

Residues 1–57 (MLKPQIHKPHLVNKLPLGTPFIPSHASIASFSTTSLRTLSVQKCYRRYIRYTSSNIK) constitute a chloroplast transit peptide. One can recognise a PLAT domain in the interval 83–203 (ALTAVTVGLL…DNPDKRIFFL (121 aa)). The 694-residue stretch at 206-899 (SYLPSETPEG…GKGVPYSISI (694 aa)) folds into the Lipoxygenase domain. The disordered stretch occupies residues 252 to 286 (DPDTDSDMARPVLGGNEHPFPRRCRTGRKMTSTEP). Fe cation contacts are provided by H557, H562, H749, N753, and I899.

The protein belongs to the lipoxygenase family. The cofactor is Fe cation. As to expression, confined to glandular trichomes in flowers.

The protein resides in the plastid. Its subcellular location is the chloroplast. The protein operates within lipid metabolism; oxylipin biosynthesis. Its function is as follows. Plant lipoxygenases may be involved in a number of diverse aspects of plant physiology including growth and development, pest resistance, and senescence or responses to wounding. Catalyzes the hydroperoxidation of lipids containing a cis,cis-1,4-pentadiene structure. The polypeptide is Lipoxygenase 2, chloroplastic (Tanacetum cinerariifolium (Dalmatian daisy)).